The sequence spans 458 residues: GTPase Obg (458 aa).

The 157-residue stretch at 1–157 (MSFLDRVKIY…ITLYLELKVL (157 aa)) folds into the Obg domain. The OBG-type G domain maps to 158-326 (ADLGLVGFPN…VLNEIVKVIS (169 aa)). Residues 164 to 171 (GFPNAGKS), 189 to 193 (FTTLN), 210 to 213 (DIPG), 280 to 283 (NKAD), and 307 to 309 (SAA) each bind GTP. The Mg(2+) site is built by S171 and T191. The OCT domain occupies 341-419 (AVHGVEPLFK…VGQKEFEWSG (79 aa)). Residues 420 to 458 (TELDSERAEQPDFEGYKRRTTQAERLEKRRQRRLKKEEK) are disordered. Basic and acidic residues predominate over residues 423–446 (DSERAEQPDFEGYKRRTTQAERLE). Residues 447-458 (KRRQRRLKKEEK) are compositionally biased toward basic residues.

Belongs to the TRAFAC class OBG-HflX-like GTPase superfamily. OBG GTPase family. In terms of assembly, monomer. Mg(2+) is required as a cofactor.

It is found in the cytoplasm. An essential GTPase which binds GTP, GDP and possibly (p)ppGpp with moderate affinity, with high nucleotide exchange rates and a fairly low GTP hydrolysis rate. Plays a role in control of the cell cycle, stress response, ribosome biogenesis and in those bacteria that undergo differentiation, in morphogenesis control. This is GTPase Obg from Elusimicrobium minutum (strain Pei191).